The chain runs to 733 residues: DNA repair and recombination protein RAD54-like (733 aa).

The disordered stretch occupies residues 1–35 (LAKRKAGGEEEDGEWRPPATQKRQKAGSEAESADC). The Helicase ATP-binding domain occupies 159-334 (SRRIPGSHGC…FSLVHFVNSG (176 aa)). 172–179 (DEMGLGKT) provides a ligand contact to ATP. Residues 285–288 (DEGH) carry the DEGH box motif. The 155-residue stretch at 488 to 642 (LVLDYILAVT…CVVDEEQDVE (155 aa)) folds into the Helicase C-terminal domain. K504 carries the N6-acetyllysine modification. S561 bears the Phosphoserine; by NEK1 mark.

It belongs to the SNF2/RAD54 helicase family. As to quaternary structure, homohexamer. Interacts (via N-terminus) with RAD51. Interacts with NAP1L1. Interacts with BRD9; this interaction orchestrates RAD51-RAD54 complex formation. Post-translationally, acetylated. Acetylation promotes interaction with BRD9, and subsequently with RAD54, which is essential for homologous recombination (HR). Phosphorylated. Phosphorylation at Ser-561 by NEK1 specifically in G2 phase allows efficient removal of RAD51 filaments from DNA. Highly expressed in bursa, thymus, testis, and ovary. Low level of expression seen in all other organs tested.

The protein localises to the nucleus. Plays an essential role in homologous recombination (HR) which is a major pathway for repairing DNA double-strand breaks (DSBs), single-stranded DNA (ssDNA) gaps, and stalled or collapsed replication forks. Acts as a molecular motor during the homology search and guides RAD51 ssDNA along a donor dsDNA thereby changing the homology search from the diffusion-based mechanism to a motor-guided mechanism. Plays also an essential role in RAD51-mediated synaptic complex formation which consists of three strands encased in a protein filament formed once homology is recognized. Once DNA strand exchange occured, dissociates RAD51 from nucleoprotein filaments formed on dsDNA. The polypeptide is DNA repair and recombination protein RAD54-like (RAD54L) (Gallus gallus (Chicken)).